The sequence spans 44 residues: pyr operon leader peptide (44 aa).

This chain is pyr operon leader peptide (pyrL), found in Shigella flexneri.